A 392-amino-acid polypeptide reads, in one-letter code: DNA replication protein (392 aa).

Positions 322 to 341 are disordered; it reads NGGNKKISEGTSRAQRKAPH.

May play a role in viral DNA replication. Found associated with a viral DNA origin of replication and with host membranes, may attach this origin to the bacterial envelope to initiate replication. This chain is DNA replication protein (69), found in Enterobacteria phage T4 (Bacteriophage T4).